Reading from the N-terminus, the 180-residue chain is Crossover junction endodeoxyribonuclease RuvC (180 aa).

Active-site residues include Asp-7, Glu-66, and Asp-138. Asp-7, Glu-66, and Asp-138 together coordinate Mg(2+).

It belongs to the RuvC family. Homodimer which binds Holliday junction (HJ) DNA. The HJ becomes 2-fold symmetrical on binding to RuvC with unstacked arms; it has a different conformation from HJ DNA in complex with RuvA. In the full resolvosome a probable DNA-RuvA(4)-RuvB(12)-RuvC(2) complex forms which resolves the HJ. Mg(2+) serves as cofactor.

Its subcellular location is the cytoplasm. It carries out the reaction Endonucleolytic cleavage at a junction such as a reciprocal single-stranded crossover between two homologous DNA duplexes (Holliday junction).. In terms of biological role, the RuvA-RuvB-RuvC complex processes Holliday junction (HJ) DNA during genetic recombination and DNA repair. Endonuclease that resolves HJ intermediates. Cleaves cruciform DNA by making single-stranded nicks across the HJ at symmetrical positions within the homologous arms, yielding a 5'-phosphate and a 3'-hydroxyl group; requires a central core of homology in the junction. The consensus cleavage sequence is 5'-(A/T)TT(C/G)-3'. Cleavage occurs on the 3'-side of the TT dinucleotide at the point of strand exchange. HJ branch migration catalyzed by RuvA-RuvB allows RuvC to scan DNA until it finds its consensus sequence, where it cleaves and resolves the cruciform DNA. This chain is Crossover junction endodeoxyribonuclease RuvC, found in Burkholderia orbicola (strain AU 1054).